The primary structure comprises 136 residues: Nucleoside diphosphate kinase (136 aa).

6 residues coordinate ATP: Lys10, Phe58, Arg86, Thr92, Arg104, and Asn114. The Pros-phosphohistidine intermediate role is filled by His117.

It belongs to the NDK family. Homotetramer. Mg(2+) is required as a cofactor.

The protein resides in the cytoplasm. It carries out the reaction a 2'-deoxyribonucleoside 5'-diphosphate + ATP = a 2'-deoxyribonucleoside 5'-triphosphate + ADP. The catalysed reaction is a ribonucleoside 5'-diphosphate + ATP = a ribonucleoside 5'-triphosphate + ADP. In terms of biological role, major role in the synthesis of nucleoside triphosphates other than ATP. The ATP gamma phosphate is transferred to the NDP beta phosphate via a ping-pong mechanism, using a phosphorylated active-site intermediate. The protein is Nucleoside diphosphate kinase of Corynebacterium jeikeium (strain K411).